Consider the following 377-residue polypeptide: MNHSERFVFIAEWFDPNASLFRRYELLFYPGDGSVEMHDVKNHRTFLKRTKYEDLHLEDLFIGNKVNIFSRQLVLLDYGDQYTARQLGSKKEKTLALIKPDAVSKAGEIIEIINKAGFTLTKLKMMTLSRKEATDFHIDHQSRPFLNELIQFITSGPIIAMEILRDDAVCEWKRLLGPANSGLARTDAPESIRALFGTDGIKNAAHGPDSFACAAREMELFFPSSGVCGPANTAKFTNCTTCCIVKPHAVSEGLLGKILMTIRDAGFEISAMQMFNMDRINVEEFYEVYKGVVSEYNEMVTEMYSGPCVAMEIQQTNPTMTFREFCGPADPEIARHLRPGTLRAIFGKTKIQNAVHCTDLPEDGLLEVQYFFKILDN.

The region spanning 3-91 is the DM10 domain; the sequence is HSERFVFIAE…YTARQLGSKK (89 aa).

The protein belongs to the NDK family. In terms of assembly, component of sperm flagellar doublet microtubules. Component of the gamma-tubulin ring complex. As to expression, expressed in trachea multiciliated cells.

Its subcellular location is the cytoplasm. It localises to the cytoskeleton. It is found in the microtubule organizing center. The protein localises to the centrosome. The protein resides in the nucleus. Its subcellular location is the spindle. It localises to the cilium axoneme. It is found in the flagellum axoneme. The protein localises to the cell projection. The protein resides in the cilium. Its function is as follows. Possesses an intrinsic kinase activity. Displays 3'-5' exonuclease activity with a preference for single-stranded DNA. Does not seem to have nucleoside diphosphate kinase activity. Functional component of the gamma-tubulin ring complex, implicated in the regulation of the microtubule-nucleating activity of the gamma-tubulin ring complex in centrosomes, in a kinase activity-dependent manner. Part of the dynein-decorated doublet microtubules (DMTs) in cilia axoneme, which is required for motile cilia beating. The chain is Nucleoside diphosphate kinase homolog 7 (NME7) from Bos taurus (Bovine).